The chain runs to 194 residues: Large ribosomal subunit protein bL9 (194 aa).

The tract at residues 167 to 194 (EDRAAEAEAASDMAAGGAGSFEGDHYES) is disordered.

This sequence belongs to the bacterial ribosomal protein bL9 family.

Its function is as follows. Binds to the 23S rRNA. The polypeptide is Large ribosomal subunit protein bL9 (Caulobacter sp. (strain K31)).